The following is a 331-amino-acid chain: Gamma-parvin (331 aa).

The residue at position 1 (Met1) is an N-acetylmethionine. Residues 18–38 (QPTEEELPRGGKKKYLSPNSK) are disordered. 2 consecutive Calponin-homology (CH) domains span residues 44–151 (EELQ…KRFQ) and 210–317 (HAVQ…QKHS).

The protein belongs to the parvin family. Interacts with ILK; the interaction promotes the establishment of cell polarity required for leukocyte migration. Interacts with ARHGEF6; the guanine nucleotide exchange factor activity of ARHGEF6 is essential for the PARVG-induced enhancement of cell spreading. As to expression, expressed strongly in spleen and testis, moderately in lung and weakly in brain and heart.

The protein resides in the cell junction. It localises to the focal adhesion. The protein localises to the cell membrane. It is found in the cytoplasm. Its subcellular location is the cytoskeleton. Functionally, plays a role with ILK in promoting the cell adhesion and spreading of leukocytes. The protein is Gamma-parvin (Parvg) of Mus musculus (Mouse).